Consider the following 248-residue polypeptide: ATP synthase subunit a, chloroplastic (248 aa).

5 helical membrane-spanning segments follow: residues 35 to 55 (GQVF…AIAG), 94 to 114 (IPYI…GALI), 133 to 153 (INTT…AGLS), 202 to 222 (VFTL…GLFA), and 224 to 244 (SIQA…ALEG).

This sequence belongs to the ATPase A chain family. In terms of assembly, F-type ATPases have 2 components, CF(1) - the catalytic core - and CF(0) - the membrane proton channel. CF(1) has five subunits: alpha(3), beta(3), gamma(1), delta(1), epsilon(1). CF(0) has four main subunits: a, b, b' and c.

The protein localises to the plastid. Its subcellular location is the chloroplast thylakoid membrane. Functionally, key component of the proton channel; it plays a direct role in the translocation of protons across the membrane. The polypeptide is ATP synthase subunit a, chloroplastic (Antithamnion sp. (Red alga)).